We begin with the raw amino-acid sequence, 329 residues long: Cytosolic Fe-S cluster assembly factor NBP35 (329 aa).

Residues 1 to 33 (MAPSQVEDISKTELETPEHCPGPESEQAGKEDA) are disordered. Over residues 8–18 (DISKTELETPE) the composition is skewed to basic and acidic residues. 4 residues coordinate [4Fe-4S] cluster: cysteine 20, cysteine 34, cysteine 37, and cysteine 43. Residue 74-81 (GKGGVGKS) coordinates ATP. Residues cysteine 248 and cysteine 251 each contribute to the [4Fe-4S] cluster site.

Belongs to the Mrp/NBP35 ATP-binding proteins family. NUBP1/NBP35 subfamily. Heterotetramer of 2 NBP35 and 2 CFD1 chains. [4Fe-4S] cluster is required as a cofactor.

The protein localises to the cytoplasm. The protein resides in the nucleus. Functionally, component of the cytosolic iron-sulfur (Fe/S) protein assembly (CIA) machinery. Required for maturation of extramitochondrial Fe-S proteins. The NBP35-CFD1 heterotetramer forms a Fe-S scaffold complex, mediating the de novo assembly of an Fe-S cluster and its transfer to target apoproteins. Required for biogenesis and export of both ribosomal subunits, which may reflect a role in assembly of the Fe/S clusters in RLI1, a protein which performs rRNA processing and ribosome export. This Debaryomyces hansenii (strain ATCC 36239 / CBS 767 / BCRC 21394 / JCM 1990 / NBRC 0083 / IGC 2968) (Yeast) protein is Cytosolic Fe-S cluster assembly factor NBP35.